A 189-amino-acid chain; its full sequence is Large ribosomal subunit protein bL17 (189 aa).

A disordered region spans residues Lys-136 to Lys-189. A compositionally biased stretch (acidic residues) spans Ala-141 to Lys-189.

This sequence belongs to the bacterial ribosomal protein bL17 family. In terms of assembly, part of the 50S ribosomal subunit. Contacts protein L32.

The protein is Large ribosomal subunit protein bL17 of Paenarthrobacter aurescens (strain TC1).